Here is a 3166-residue protein sequence, read N- to C-terminus: MVFESVVVEVLNRFLGDYVVNLDESQLSLGIWKGAVALKNLVIKENALHELDVPFKVKVGHIGSLKLKIPWKNLYTQPVEAVLEEIFLLIVPSSRIQYDPIKEEKQLMETKQQELKRIEKAKQKVFDKEKPREEKQDTFTEKLVTQIIQNLQVQISSIHIRYEDDITNGDKPLSFGISLQNISLQTTDQYWIPCLHDNTEKLVRKLIRLDNLFAYWNVNSEMFYLNDYDESLKALKNGIVNENIVPEGYDFVFRPISASAKLQMNRRSDFDFSDPKINLAVDLHTIAIEFNKPQYFSLMELLESIDMMTQNQPYRKFKPSVPLHLHAKEWWAYAIHSILEVNVCPSLRMWSWEHIRNHRYKMKRYREFYKKKLTSKKPSPEILMSLEELEKTLDVFNITIARQQAEVEAKKAGYKIYKEGVKDPEDNAGWFGWLWTWSESNANQQQDVKPGILEEMLTPEEKSLLYEAIGYSETAVDPTLPKTFEALKFFVHLKSMSIVLRENHQKPELLNVVVEGLSTSVVQRPGAQAIKFETKIDSFHITGLPDDFKKPHLLSSLDDTSLLQITFEINPLNETVAQRCTIEAEPLEIIYDARTVNSIVEFFRPPKDVHLAQLTSVTLTKLEEFRAKTATGLLYVIETQKVLDLRINVKASYVIVPQYGNFSPTSNLLLLDLGHLKVSSKRRSLLPDVRPSEASLEDIMHRAYDSFDIQLTSIQLLYSRVGDNWKEARKLNVSTQHILIPMHVNVELSKAMVFMDIKMPKFKISGKLPLVSLRISDKKLQGIMELLGSIPKPEPVTDVSAPARSFQIQASALPVSHISQKLIPLLEQPVTEDDSEEEFFDAPCSPLEECPQVSCRDKCTRQKKLQKKDCVMNLIQLRMRFEVAEVSIQFYHLVGDCELPVLEMGALGLGTEAEFRTFDLKGSAFLKELWLKCPEYLDENKKPVYLITTLDNTMEDLLTLEFMKVEKNAPNLNSTYNNVLQLIKVNFSSLDIHLHTEALLNTMNYLNNILPELREKSASVSAAEPEDKGDIIKKLALKLPTNEDIITLQLLAELSCLQIFIQDQKQNISEIKIEGLDSEMIMKPLVTEINAKLRNIIVLDSDKMAIYKKALYITGKEVFSFKMISYMDATAGYAYTDMSVVDIRVHLTVGCIEVVFITKFLYSILAFIDNFQAVKDALAEATVQAAEMAADGVKELARKSSRFALDVNIKAPVVLIPQSPVSQNVFVADFGLITMKNIFVTVTETQSNIPPVIDLITIKLSKMRLYRSQFRNDTYQEVLDLLLPLNLEVIVERNLSWEWYKEVPCFNIKAQLKPMEFILSQEDLTTVFQTLHGNIWYGQDLSAPSSANKDPETMTSGVTSPPDHSPATVVTAAVVEVHPQASQAHTMLNVSFQTDYLTMALYSPGPDEASFTDVRDPSLELAEFKLENIISSLKIYTDDSTVFSFSVKNCILDDKRSHVMKATPRMIGLTVGFDKKDMVDIKYRKIKTFVVTDAVVQEMYVCASVEFLMTVAHIFFDAYMTSTALETSVQTRTTREAPAQELGKWEMNILIKNPEIVFVADMTRNDAPALVITTQCEICCKGEPTSNTVTAAIKDLQVRACPFLPVKRKGKVTTVLQPCDLFYQATQLGRDPQMIDISVKSLTLKVSPVIINTIITITSALYTTKETVPEENTSNIAHLWDKKDTKNLKMWFLEESNESEKVVPTNEVMPGGETLNLRIDSIFIVLEAGIGHRTVPMLLAKACFSGESKNWLSLINLHCHLELEVHYYNEMFGVWEPLLEPLEIDQTDDFRPWNLGIKMKKKAKEAIVESDSEAENYKVPEYKTAISFYSRDQLNITLSKCGLVMLNNLVEAFTEAATGSSSVFLRDLAPFMIFNSLGLTVSVSPSDSFSVLNVPLAKSYELKNDESLSMDYVRTKDNDHFNAMTSLSSKLFFILLTPANHSVADKIPLTKVGRRLYTVRHRESGVERSIICQIDTVEGSKKVTIRSPVQIKNHFSIPISVFEGDTLLGIASPENEFNIPLASYRSSLSLVPEDQDYQLCEGIDFEEIIKYDGQLLKKKCRSTNPSKKSFVINIVPEKDNLASLSVYSEDGWDLPYVLHLWPPILIRNLLPYKVAYYIEGIENTVVTLSEGHSSQIYNVEMDQAKLHLKLLDYLNHDWKSEFYIRSSQQDINFINFTCLTEMEKSDLDIAIHMTYNTGQTVVAFHSPYWMVNKTNRMLQYKADGIHRKHPPNYTKPVLFSFQPNHFFNNNKVQLMVTDSELSDQFSIDTVGSHGAIRCKGLKMEYQVGVTINLSSFNITRIVTFIPFYMIKNKSKYHISVAEEGSDKWLSLDLEQSIPFWPENASNILLIQVERSEDPPKRIYFNKQDNCILLRLNNELGGIIAEVNLAEHSTVITFSDYHDGAATFLLINHTKSDPVQYNQSSLGEIEDSLPPGKAVYYTWADPVGSRKLKWSCGQSYGEVTHKDDMMTPISVGKKTIYLVSFFEGLQRIILFTEDPRVFKVTYESEKAELAELEVVLALQDVGISLVNNYTKQEVAYIGITSSDVVWEAKPKKKARWKPMSVKHTEKLEKEFREYTEASPLEDKVVELDNIPVRLTPSGNDMKILQPHVIPVRRNYLPALKVEYNTSAHQSSFRIQIYRIQIQNQIHGAIFPFVFYPIKPPRSVTMDSAPKPFTDVSIVMRSAGHSQISRIKYFKVLIQEMDLSLDLGFVYALADLVTKAEVTEKTEVEHFHKDVEAFEQEYEVVSSVDQSQVNLFEYFHISPIKLHLSVSLSSGRDEAKDSEQHGGLIPVHSLNLLLKSIGATLTDVQDVVFKLAFFELNYQFHTTSELQSEVIRHYSKQAIKQMYVLILGLDVLGNPFGLIREFSEGVEAFFYEPYQGAIQGPEEFVEGMALGLKALVGGAVGGLAGAASKITSAMAKGVAAMTMDEDYQQKRREAMNKQPAGLREGITRGGKGLVSGFVSGITGIVTKPIKGAQKEGAAGFFKGVGKGLVGAVTRPTGGIIDMASSTFQGIKRATETSEVESLRPPRFFNEDGVIRPYRLRDGSGNQMLQVMENGRFAKYKYFTHVMINKTDMFMITRRGVLFVTKGTFGQLTCEWQYTFDEFTKEPFIVHGRRLRIEAKERVKSVFHAKEFGKIVNFKTPEDARWILTKLEEAREPSPRL.

A Chorein N-terminal domain is found at 3–116 (FESVVVEVLN…LMETKQQELK (114 aa)). TPR repeat units lie at residues 212 to 245 (LFAY…ENIV) and 373 to 406 (LTSK…QQAE). Phosphothreonine is present on threonine 831. Serine 835 is modified (phosphoserine). The short motif at 838-844 (EFFDAPC) is the FFAT element. Polar residues predominate over residues 1343–1359 (APSSANKDPETMTSGVT). Residues 1343 to 1365 (APSSANKDPETMTSGVTSPPDHS) form a disordered region. A Phosphoserine modification is found at serine 1410. TPR repeat units lie at residues 1806–1840 (AIVE…TLSK) and 1999–2034 (ISVF…VPED). In terms of domain architecture, SHR-BD spans 2202-2447 (VAFHSPYWMV…VYYTWADPVG (246 aa)). Required for mitochondrial localization stretches follow at residues 2607-3166 (LQPH…SPRL) and 2743-3166 (EYEV…SPRL). TPR repeat units follow at residues 2716–2750 (ADLV…VSSV) and 2852–2890 (ILGL…PEEF). Residues 2945–3019 (PAGLREGITR…SSTFQGIKRA (75 aa)) are required for lipid droplet localization.

It belongs to the VPS13 family. Interacts (via FFAT motif) with VAPA and VAPB. Interacts with RAB7A. Interacts with XK.

It localises to the mitochondrion outer membrane. The protein localises to the endoplasmic reticulum membrane. Its subcellular location is the endosome membrane. The protein resides in the lysosome membrane. It is found in the lipid droplet. It localises to the golgi apparatus. The protein localises to the cytoplasmic vesicle. Its subcellular location is the secretory vesicle. The protein resides in the neuronal dense core vesicle. Functionally, mediates the transfer of lipids between membranes at organelle contact sites. Required for the formation or stabilization of ER-mitochondria contact sites which enable transfer of lipids between the ER and mitochondria. Negatively regulates lipid droplet size and motility. Required for efficient lysosomal protein degradation. This Mus musculus (Mouse) protein is Intermembrane lipid transfer protein VPS13A.